The following is a 492-amino-acid chain: MALNSGSPPAIGPYYENHGYQPENPYPAQPTVVPTVYEVHPAQYYPSPVPQYAPRVLTQASNPVVCTQPKSPSGTVCTSKTKKALCITLTLGTFLVGAALAAGLLWKFMGSKCSNSGIECDSSGTCINPSNWCDGVSHCPGGEDENRCVRLYGPNFILQVYSSQRKSWHPVCQDDWNENYGRAACRDMGYKNNFYSSQGIVDDSGSTSFMKLNTSAGNVDIYKKLYHSDACSSKAVVSLRCIACGVNLNSSRQSRIVGGESALPGAWPWQVSLHVQNVHVCGGSIITPEWIVTAAHCVEKPLNNPWHWTAFAGILRQSFMFYGAGYQVEKVISHPNYDSKTKNNDIALMKLQKPLTFNDLVKPVCLPNPGMMLQPEQLCWISGWGATEEKGKTSEVLNAAKVLLIETQRCNSRYVYDNLITPAMICAGFLQGNVDSCQGDSGGPLVTSKNNIWWLIGDTSWGSGCAKAYRPGVYGNVMVFTDWIYRQMRADG.

Residues 1–84 lie on the Cytoplasmic side of the membrane; it reads MALNSGSPPA…TVCTSKTKKA (84 aa). A helical; Signal-anchor for type II membrane protein transmembrane segment spans residues 85–105; sequence LCITLTLGTFLVGAALAAGLL. Topologically, residues 106–492 are extracellular; sequence WKFMGSKCSN…WIYRQMRADG (387 aa). Disulfide bonds link cysteine 113-cysteine 126, cysteine 120-cysteine 139, cysteine 133-cysteine 148, cysteine 172-cysteine 231, cysteine 185-cysteine 241, cysteine 244-cysteine 365, cysteine 281-cysteine 297, cysteine 410-cysteine 426, and cysteine 437-cysteine 465. Residues 118-148 enclose the LDL-receptor class A domain; sequence IECDSSGTCINPSNWCDGVSHCPGGEDENRC. Ca(2+)-binding residues include asparagine 131, aspartate 134, valine 136, aspartate 144, and glutamate 145. An SRCR domain is found at 149 to 242; that stretch reads VRLYGPNFIL…SKAVVSLRCI (94 aa). Residues asparagine 213 and asparagine 249 are each glycosylated (N-linked (GlcNAc...) asparagine). One can recognise a Peptidase S1 domain in the interval 256 to 492; sequence IVGGESALPG…WIYRQMRADG (237 aa). Active-site charge relay system residues include histidine 296 and aspartate 345. Residues 340–470 are HKU1-CoV S protein-binding; it reads KTKNNDIALM…WGSGCAKAYR (131 aa). The Charge relay system role is filled by serine 441.

It belongs to the peptidase S1 family. As to quaternary structure, the catalytically active form interacts with ACE2. In terms of processing, proteolytically processed; by an autocatalytic mechanism. Autocleavage induces active conformation. As to expression, expressed in several tissues that comprise large populations of epithelial cells with the highest level of transcripts measured in the prostate gland. Expressed in type II pneumocytes in the lung (at protein level). Expressed strongly in small intestine. Also expressed in colon, stomach and salivary gland. Coexpressed with ACE2 within lung type II pneumocytes, ileal absorptive enterocytes, intestinal epithelial cells, cornea, gallbladder and nasal goblet secretory cells.

The protein resides in the cell membrane. It is found in the secreted. The catalysed reaction is The enzyme cleaves angiotensin-converting enzyme 2 (EC 3.4.17.23) and cleaves influenzea A and B virus and coronavirus spike glycoproteins at arginine residues.. Its function is as follows. Plasma membrane-anchored serine protease that cleaves at arginine residues. Participates in proteolytic cascades of relevance for the normal physiologic function of the prostate. Androgen-induced TMPRSS2 activates several substrates that include pro-hepatocyte growth factor/HGF, the protease activated receptor-2/F2RL1 or matriptase/ST14 leading to extracellular matrix disruption and metastasis of prostate cancer cells. In addition, activates trigeminal neurons and contribute to both spontaneous pain and mechanical allodynia. In terms of biological role, (Microbial infection) Facilitates human coronaviruses SARS-CoV and SARS-CoV-2 infections via two independent mechanisms, proteolytic cleavage of ACE2 receptor which promotes viral uptake, and cleavage of coronavirus spike glycoproteins which activates the glycoprotein for host cell entry. The cleavage of SARS-COV2 spike glycoprotein occurs between the S2 and S2' site. Upon SARS-CoV-2 infection, increases syncytia formation by accelerating the fusion process. Proteolytically cleaves and activates the spike glycoproteins of human coronavirus 229E (HCoV-229E) and human coronavirus EMC (HCoV-EMC) and the fusion glycoproteins F0 of Sendai virus (SeV), human metapneumovirus (HMPV), human parainfluenza 1, 2, 3, 4a and 4b viruses (HPIV). Essential for spread and pathogenesis of influenza A virus (strains H1N1, H3N2 and H7N9); involved in proteolytic cleavage and activation of hemagglutinin (HA) protein which is essential for viral infectivity. (Microbial infection) Receptor for human coronavirus HKU1-CoV, acts synergistically with disialoside glycans to facilitate the entry of the virus. After binding to cell-surface disialoside glycans, the viral S protein interacts with the inactive form of TMPRSS2 and inhibits its protease activity. The chain is Transmembrane protease serine 2 from Homo sapiens (Human).